A 494-amino-acid chain; its full sequence is Xylan glycosyltransferase MUCI21 (494 aa).

Residues 1–40 (MRQNLKKVAQIKVDESKKLFPYVFRVKTSCGNCAKRSKPK) are Cytoplasmic-facing. A helical; Signal-anchor for type II membrane protein membrane pass occupies residues 41 to 61 (LIYLLIFSLISSCFVFAPQLL). Residues 62-494 (CFPYPSALFL…LIDAYAKSIR (433 aa)) are Lumenal-facing. The N-linked (GlcNAc...) asparagine glycan is linked to Asn-375.

It belongs to the glycosyltransferase 61 family.

The protein localises to the golgi apparatus membrane. Glycosyletransferase required for the proper composition and structural properties of released seed coat mucilage. Required for the production of highly branched xylan polymers in seed coat mucilage. Facilitates the addition of xylose residues directly to the xylan backbone. Xylan with xylose side chains seems to be necessary for pectin attachment to the seed surface. Essential for xylan synthesis in seed coat epidermal (SCE) cells. The chain is Xylan glycosyltransferase MUCI21 from Arabidopsis thaliana (Mouse-ear cress).